A 233-amino-acid polypeptide reads, in one-letter code: Phosphoribosylaminoimidazole-succinocarboxamide synthase (233 aa).

The protein belongs to the SAICAR synthetase family.

It carries out the reaction 5-amino-1-(5-phospho-D-ribosyl)imidazole-4-carboxylate + L-aspartate + ATP = (2S)-2-[5-amino-1-(5-phospho-beta-D-ribosyl)imidazole-4-carboxamido]succinate + ADP + phosphate + 2 H(+). Its pathway is purine metabolism; IMP biosynthesis via de novo pathway; 5-amino-1-(5-phospho-D-ribosyl)imidazole-4-carboxamide from 5-amino-1-(5-phospho-D-ribosyl)imidazole-4-carboxylate: step 1/2. The polypeptide is Phosphoribosylaminoimidazole-succinocarboxamide synthase (Staphylococcus saprophyticus subsp. saprophyticus (strain ATCC 15305 / DSM 20229 / NCIMB 8711 / NCTC 7292 / S-41)).